Consider the following 311-residue polypeptide: Eukaryotic translation initiation factor 3 subunit E (311 aa).

The 181-residue stretch at 100–280 (VYYNYPKGRD…MGVKSVSIHE (181 aa)) folds into the PCI domain.

Belongs to the eIF-3 subunit E family. As to quaternary structure, component of the eukaryotic translation initiation factor 3 (eIF-3) complex.

It localises to the cytoplasm. In terms of biological role, component of the eukaryotic translation initiation factor 3 (eIF-3) complex, which is involved in protein synthesis of a specialized repertoire of mRNAs and, together with other initiation factors, stimulates binding of mRNA and methionyl-tRNAi to the 40S ribosome. The eIF-3 complex specifically targets and initiates translation of a subset of mRNAs involved in cell proliferation. The polypeptide is Eukaryotic translation initiation factor 3 subunit E (Caenorhabditis briggsae).